We begin with the raw amino-acid sequence, 358 residues long: UPF0324 membrane protein CT0845 (358 aa).

Transmembrane regions (helical) follow at residues 36–53, 57–76, 83–105, 115–134, 146–168, 178–200, 244–261, 276–295, 307–325, and 335–357; these read YFPG…ATFL, YGAP…RFLS, LVGI…GMRI, VKPV…FGLA, GVLT…AAVL, TIFT…PVVA, LLRV…SLIF, LLPP…SLGV, VSRW…KTSL, and PVSI…VVWM.

This sequence belongs to the UPF0324 family.

Its subcellular location is the cell membrane. The chain is UPF0324 membrane protein CT0845 from Chlorobaculum tepidum (strain ATCC 49652 / DSM 12025 / NBRC 103806 / TLS) (Chlorobium tepidum).